The chain runs to 247 residues: 1-(5-phosphoribosyl)-5-[(5-phosphoribosylamino)methylideneamino] imidazole-4-carboxamide isomerase (247 aa).

Asp16 serves as the catalytic Proton acceptor. The Proton donor role is filled by Asp135.

It belongs to the HisA/HisF family.

Its subcellular location is the cytoplasm. It carries out the reaction 1-(5-phospho-beta-D-ribosyl)-5-[(5-phospho-beta-D-ribosylamino)methylideneamino]imidazole-4-carboxamide = 5-[(5-phospho-1-deoxy-D-ribulos-1-ylimino)methylamino]-1-(5-phospho-beta-D-ribosyl)imidazole-4-carboxamide. The protein operates within amino-acid biosynthesis; L-histidine biosynthesis; L-histidine from 5-phospho-alpha-D-ribose 1-diphosphate: step 4/9. The polypeptide is 1-(5-phosphoribosyl)-5-[(5-phosphoribosylamino)methylideneamino] imidazole-4-carboxamide isomerase (Paenarthrobacter aurescens (strain TC1)).